Reading from the N-terminus, the 245-residue chain is Zinc import ATP-binding protein ZnuC (245 aa).

The ABC transporter domain occupies 27–244 (LTADSLTLFY…AKFLSVFPNN (218 aa)). 59 to 66 (GPNGGGKT) contributes to the ATP binding site.

It belongs to the ABC transporter superfamily. Zinc importer (TC 3.A.1.15.5) family. In terms of assembly, the complex is composed of two ATP-binding proteins (ZnuC), two transmembrane proteins (ZnuB) and a solute-binding protein (ZnuA).

It is found in the cell inner membrane. It catalyses the reaction Zn(2+)(out) + ATP(in) + H2O(in) = Zn(2+)(in) + ADP(in) + phosphate(in) + H(+)(in). Its function is as follows. Part of the ABC transporter complex ZnuABC involved in zinc import. Responsible for energy coupling to the transport system. This Anaplasma marginale (strain St. Maries) protein is Zinc import ATP-binding protein ZnuC.